A 490-amino-acid polypeptide reads, in one-letter code: Bifunctional protein HldE (490 aa).

The ribokinase stretch occupies residues 1–330 (MNNFDTLLQS…RKILPHASLA (330 aa)). 205–208 (NRKE) provides a ligand contact to ATP. The active site involves aspartate 275. Residues 358–490 (FTNGCFDILH…LVEKAREGTS (133 aa)) form a cytidylyltransferase region.

The protein in the N-terminal section; belongs to the carbohydrate kinase PfkB family. This sequence in the C-terminal section; belongs to the cytidylyltransferase family. Homodimer.

The catalysed reaction is D-glycero-beta-D-manno-heptose 7-phosphate + ATP = D-glycero-beta-D-manno-heptose 1,7-bisphosphate + ADP + H(+). The enzyme catalyses D-glycero-beta-D-manno-heptose 1-phosphate + ATP + H(+) = ADP-D-glycero-beta-D-manno-heptose + diphosphate. It participates in nucleotide-sugar biosynthesis; ADP-L-glycero-beta-D-manno-heptose biosynthesis; ADP-L-glycero-beta-D-manno-heptose from D-glycero-beta-D-manno-heptose 7-phosphate: step 1/4. It functions in the pathway nucleotide-sugar biosynthesis; ADP-L-glycero-beta-D-manno-heptose biosynthesis; ADP-L-glycero-beta-D-manno-heptose from D-glycero-beta-D-manno-heptose 7-phosphate: step 3/4. Functionally, catalyzes the phosphorylation of D-glycero-D-manno-heptose 7-phosphate at the C-1 position to selectively form D-glycero-beta-D-manno-heptose-1,7-bisphosphate. Its function is as follows. Catalyzes the ADP transfer from ATP to D-glycero-beta-D-manno-heptose 1-phosphate, yielding ADP-D-glycero-beta-D-manno-heptose. This chain is Bifunctional protein HldE, found in Rhodopseudomonas palustris (strain HaA2).